Reading from the N-terminus, the 304-residue chain is 33 kDa chaperonin (304 aa).

2 disulfide bridges follow: C236-C238 and C269-C272.

It belongs to the HSP33 family. In terms of processing, under oxidizing conditions two disulfide bonds are formed involving the reactive cysteines. Under reducing conditions zinc is bound to the reactive cysteines and the protein is inactive.

Its subcellular location is the cytoplasm. Redox regulated molecular chaperone. Protects both thermally unfolding and oxidatively damaged proteins from irreversible aggregation. Plays an important role in the bacterial defense system toward oxidative stress. The polypeptide is 33 kDa chaperonin (Pelobacter propionicus (strain DSM 2379 / NBRC 103807 / OttBd1)).